The chain runs to 150 residues: 6,7-dimethyl-8-ribityllumazine synthase (150 aa).

5-amino-6-(D-ribitylamino)uracil-binding positions include Phe11, Ile42–Glu44, and Cys73–Ile75. Glu78 to Ser79 lines the (2S)-2-hydroxy-3-oxobutyl phosphate pocket. His81 functions as the Proton donor in the catalytic mechanism. Asn106 contributes to the 5-amino-6-(D-ribitylamino)uracil binding site. A (2S)-2-hydroxy-3-oxobutyl phosphate-binding site is contributed by Arg120.

It belongs to the DMRL synthase family.

The enzyme catalyses (2S)-2-hydroxy-3-oxobutyl phosphate + 5-amino-6-(D-ribitylamino)uracil = 6,7-dimethyl-8-(1-D-ribityl)lumazine + phosphate + 2 H2O + H(+). Its pathway is cofactor biosynthesis; riboflavin biosynthesis; riboflavin from 2-hydroxy-3-oxobutyl phosphate and 5-amino-6-(D-ribitylamino)uracil: step 1/2. In terms of biological role, catalyzes the formation of 6,7-dimethyl-8-ribityllumazine by condensation of 5-amino-6-(D-ribitylamino)uracil with 3,4-dihydroxy-2-butanone 4-phosphate. This is the penultimate step in the biosynthesis of riboflavin. In Paramagnetospirillum magneticum (strain ATCC 700264 / AMB-1) (Magnetospirillum magneticum), this protein is 6,7-dimethyl-8-ribityllumazine synthase.